We begin with the raw amino-acid sequence, 519 residues long: Ribose import ATP-binding protein RbsA 2 (519 aa).

ABC transporter domains follow at residues F15 to P252 and H262 to R506. Residue G47–S54 participates in ATP binding.

This sequence belongs to the ABC transporter superfamily. Ribose importer (TC 3.A.1.2.1) family. The complex is composed of an ATP-binding protein (RbsA), two transmembrane proteins (RbsC) and a solute-binding protein (RbsB).

It localises to the cell membrane. It catalyses the reaction D-ribose(out) + ATP + H2O = D-ribose(in) + ADP + phosphate + H(+). Functionally, part of the ABC transporter complex RbsABC involved in ribose import. Responsible for energy coupling to the transport system. In Rubrobacter xylanophilus (strain DSM 9941 / JCM 11954 / NBRC 16129 / PRD-1), this protein is Ribose import ATP-binding protein RbsA 2.